Consider the following 263-residue polypeptide: S-adenosylmethionine decarboxylase proenzyme (263 aa).

The active-site Schiff-base intermediate with substrate; via pyruvic acid is the Ser113. Ser113 carries the post-translational modification Pyruvic acid (Ser); by autocatalysis. The active-site Proton acceptor; for processing activity is the His118. Cys141 (proton donor; for catalytic activity) is an active-site residue.

It belongs to the prokaryotic AdoMetDC family. Type 2 subfamily. In terms of assembly, heterooctamer of four alpha and four beta chains arranged as a tetramer of alpha/beta heterodimers. Pyruvate serves as cofactor. Is synthesized initially as an inactive proenzyme. Formation of the active enzyme involves a self-maturation process in which the active site pyruvoyl group is generated from an internal serine residue via an autocatalytic post-translational modification. Two non-identical subunits are generated from the proenzyme in this reaction, and the pyruvate is formed at the N-terminus of the alpha chain, which is derived from the carboxyl end of the proenzyme. The post-translation cleavage follows an unusual pathway, termed non-hydrolytic serinolysis, in which the side chain hydroxyl group of the serine supplies its oxygen atom to form the C-terminus of the beta chain, while the remainder of the serine residue undergoes an oxidative deamination to produce ammonia and the pyruvoyl group blocking the N-terminus of the alpha chain.

It carries out the reaction S-adenosyl-L-methionine + H(+) = S-adenosyl 3-(methylsulfanyl)propylamine + CO2. It participates in amine and polyamine biosynthesis; S-adenosylmethioninamine biosynthesis; S-adenosylmethioninamine from S-adenosyl-L-methionine: step 1/1. Its function is as follows. Catalyzes the decarboxylation of S-adenosylmethionine to S-adenosylmethioninamine (dcAdoMet), the propylamine donor required for the synthesis of the polyamines spermine and spermidine from the diamine putrescine. This Marinobacter nauticus (strain ATCC 700491 / DSM 11845 / VT8) (Marinobacter aquaeolei) protein is S-adenosylmethionine decarboxylase proenzyme.